A 48-amino-acid polypeptide reads, in one-letter code: Delta-ctenitoxin-Pn1b (48 aa).

5 cysteine pairs are disulfide-bonded: Cys-1/Cys-15, Cys-8/Cys-21, Cys-12/Cys-48, Cys-14/Cys-31, and Cys-23/Cys-29.

The protein belongs to the neurotoxin 03 (Tx2) family. 05 subfamily. Expressed by the venom gland.

The protein localises to the secreted. Functionally, insecticidal neurotoxin that reversibly inhibits the N-methyl-D-aspartate (NMDA)-subtype of ionotropic glutamate receptor (GRIN) and inhibits inactivation of insect sodium channels (Nav). Inhibits glutamate uptake in rat brain synaptosomes. In vivo, induces immediate excitatory effects when injected intrathoracically in houseflies and cockroaches. This Phoneutria nigriventer (Brazilian armed spider) protein is Delta-ctenitoxin-Pn1b.